A 274-amino-acid polypeptide reads, in one-letter code: MQAILSSWFIQGMIKATSDMWHKGWDERNGGNISLRLLAEEVEPYRRDFYQHPRKVELTQPAPELANSWFLVTGSGKFFRNVELNPAENLVLLQVSNDGMAYHIHWGLTQGGLPTSELAAHFQSHIVRMQVSGGTNRVIMHCHATNLIALSYVQKLENASFTRLLWEGSTECLVVFPDGIGIVPWMVPGTDGIGTQTAEQMREHSLVLWPFHGIFGSGPTLDDAFGLIDTAEKSAEIMVKVLSMGGKKQTISREQLIALAARFDVTPMAAALDA.

Residue Glu117 is part of the active site. The Zn(2+) site is built by His141, His143, and His212.

Belongs to the aldolase class II family. RhaD subfamily. In terms of assembly, homotetramer. Requires Zn(2+) as cofactor.

The protein localises to the cytoplasm. It carries out the reaction L-rhamnulose 1-phosphate = (S)-lactaldehyde + dihydroxyacetone phosphate. Its pathway is carbohydrate degradation; L-rhamnose degradation; glycerone phosphate from L-rhamnose: step 3/3. Functionally, catalyzes the reversible cleavage of L-rhamnulose-1-phosphate to dihydroxyacetone phosphate (DHAP) and L-lactaldehyde. The polypeptide is Rhamnulose-1-phosphate aldolase (Yersinia pseudotuberculosis serotype IB (strain PB1/+)).